We begin with the raw amino-acid sequence, 150 residues long: Large ribosomal subunit protein uL15 (150 aa).

Over residues 1–15 (MNLSNLQPAEGSTHN) the composition is skewed to polar residues. The segment at 1 to 53 (MNLSNLQPAEGSTHNQNKRVGRGEGSGKGGTAARGHKGAKSRSGYSKKIGFEG) is disordered. Positions 23–32 (GEGSGKGGTA) are enriched in gly residues.

The protein belongs to the universal ribosomal protein uL15 family. In terms of assembly, part of the 50S ribosomal subunit.

Binds to the 23S rRNA. The sequence is that of Large ribosomal subunit protein uL15 from Flavobacterium johnsoniae (strain ATCC 17061 / DSM 2064 / JCM 8514 / BCRC 14874 / CCUG 350202 / NBRC 14942 / NCIMB 11054 / UW101) (Cytophaga johnsonae).